The following is a 448-amino-acid chain: RNA-binding protein 42 (448 aa).

The disordered stretch occupies residues 1–29 (MAGAGPAPGLPGAGGPVVPGPGAGIPGKS). At A2 the chain carries N-acetylalanine. The segment covering 11–27 (PGAGGPVVPGPGAGIPG) has biased composition (gly residues). A Phosphoserine modification is found at S132. R149 bears the Asymmetric dimethylarginine mark. The necessary for interaction with HNRNPK stretch occupies residues 204–448 (ELGLGLGLGL…QKEKKKLGLR (245 aa)). Positions 286–324 (LSLRPRPRPPRPEPPPGLMALEVPEPLSEDKKKGKPEKL) are disordered. The span at 313–324 (SEDKKKGKPEKL) shows a compositional bias: basic and acidic residues. Residues 349–427 (FRIFCGDLGN…RPIKLRKSMW (79 aa)) enclose the RRM domain.

This sequence belongs to the RRM RBM42 family. As to quaternary structure, interacts with HNRNPK.

It is found in the nucleus. Its subcellular location is the cytoplasm. Functionally, binds (via the RRM domain) to the 3'-untranslated region (UTR) of CDKN1A mRNA. This is RNA-binding protein 42 (RBM42) from Bos taurus (Bovine).